Reading from the N-terminus, the 225-residue chain is PKHD-type hydroxylase Smlt1146 (225 aa).

One can recognise a Fe2OG dioxygenase domain in the interval 78–177 (KYLPPRFNRY…RVASFFWVQS (100 aa)). His96, Asp98, and His158 together coordinate Fe cation. Arg168 serves as a coordination point for 2-oxoglutarate.

Fe(2+) serves as cofactor. L-ascorbate is required as a cofactor.

This Stenotrophomonas maltophilia (strain K279a) protein is PKHD-type hydroxylase Smlt1146.